The following is a 1128-amino-acid chain: Scavenger receptor cysteine-rich domain superfamily protein (1128 aa).

Residues 1–24 (MTSLRRGNICWVAVCAALLTLTRG) form the signal peptide. Over 25-1051 (IDVIAKPSRT…VGAQAGPAGG (1027 aa)) the chain is Extracellular. SRCR domains lie at 40-140 (VQLV…VVCN), 143-245 (VRLA…VICT), 248-348 (IRLV…VICT), 351-450 (VRLV…AKCQ), 453-553 (VQLV…VVCR), 555-654 (IRLA…VVCR), 657-757 (LRLA…VVCT), 759-866 (LRLT…VLCK), and 868-968 (IRLV…VQCK). Disulfide bonds link C65–C129, C78–C139, C109–C119, C168–C234, C181–C244, C212–C222, C273–C337, C286–C347, C316–C326, C376–C439, C389–C449, C419–C429, C478–C542, C491–C552, C522–C532, C583–C644, C596–C653, C624–C634, C682–C746, C695–C756, and C726–C736. N-linked (GlcNAc...) asparagine glycosylation is present at N87. N-linked (GlcNAc...) asparagine glycans are attached at residues N190 and N194. Residue N229 is glycosylated (N-linked (GlcNAc...) asparagine). N422 carries an N-linked (GlcNAc...) asparagine glycan. N-linked (GlcNAc...) asparagine glycans are attached at residues N601 and N612. Residues N765, N808, N834, and N936 are each glycosylated (N-linked (GlcNAc...) asparagine). Disulfide bonds link C803-C865, C833-C843, C906-C967, C937-C947, C971-C1013, and C999-C1026. Residues 969 to 1028 (AGCDWPGPIRHGSFSPNRSSYDPLTTIDVKCDAGYELMGSKTLQCVTGCDWSRPTPECQR) form the Sushi domain. The N-linked (GlcNAc...) asparagine glycan is linked to N985. A glycan (N-linked (GlcNAc...) asparagine) is linked at N1031. The chain crosses the membrane as a helical span at residues 1052-1072 (VMLIIGIILGAVVMMLIACVA). The Cytoplasmic segment spans residues 1073–1128 (LYLKGRNKNIGRGNPATTSAIWKPKKEFDELKEPVLSFSAMTAGGAGPEDGMGEDI).

From the mid-gastrula stage, expressed only in mesenchyme cells that are migrating toward the body wall. At the brachiolaria stage, expressed in presumptive coelomocytes of the coelomic pouch. Also expressed in adult coelomocytes (at protein level).

Its subcellular location is the cytoplasmic vesicle membrane. In terms of biological role, involved in aggregate formation and phagocytosis by larval mesenchyme cells and adult coelomocytes. Binds to bacteria and may act as an opsonin in the innate immune system. This Patiria pectinifera (Starfish) protein is Scavenger receptor cysteine-rich domain superfamily protein.